The sequence spans 359 residues: UDP-N-acetylglucosamine--N-acetylmuramyl-(pentapeptide) pyrophosphoryl-undecaprenol N-acetylglucosamine transferase (359 aa).

Residues 15 to 17 (TGG), N127, R166, S191, I245, 264 to 269 (ALTVSE), and Q290 contribute to the UDP-N-acetyl-alpha-D-glucosamine site.

It belongs to the glycosyltransferase 28 family. MurG subfamily.

It is found in the cell inner membrane. It carries out the reaction di-trans,octa-cis-undecaprenyl diphospho-N-acetyl-alpha-D-muramoyl-L-alanyl-D-glutamyl-meso-2,6-diaminopimeloyl-D-alanyl-D-alanine + UDP-N-acetyl-alpha-D-glucosamine = di-trans,octa-cis-undecaprenyl diphospho-[N-acetyl-alpha-D-glucosaminyl-(1-&gt;4)]-N-acetyl-alpha-D-muramoyl-L-alanyl-D-glutamyl-meso-2,6-diaminopimeloyl-D-alanyl-D-alanine + UDP + H(+). It participates in cell wall biogenesis; peptidoglycan biosynthesis. Cell wall formation. Catalyzes the transfer of a GlcNAc subunit on undecaprenyl-pyrophosphoryl-MurNAc-pentapeptide (lipid intermediate I) to form undecaprenyl-pyrophosphoryl-MurNAc-(pentapeptide)GlcNAc (lipid intermediate II). The sequence is that of UDP-N-acetylglucosamine--N-acetylmuramyl-(pentapeptide) pyrophosphoryl-undecaprenol N-acetylglucosamine transferase from Pseudomonas putida (strain ATCC 700007 / DSM 6899 / JCM 31910 / BCRC 17059 / LMG 24140 / F1).